Consider the following 81-residue polypeptide: Exodeoxyribonuclease 7 small subunit (81 aa).

This sequence belongs to the XseB family. Heterooligomer composed of large and small subunits.

The protein localises to the cytoplasm. It catalyses the reaction Exonucleolytic cleavage in either 5'- to 3'- or 3'- to 5'-direction to yield nucleoside 5'-phosphates.. Its function is as follows. Bidirectionally degrades single-stranded DNA into large acid-insoluble oligonucleotides, which are then degraded further into small acid-soluble oligonucleotides. The protein is Exodeoxyribonuclease 7 small subunit of Rhodopseudomonas palustris (strain BisA53).